A 245-amino-acid polypeptide reads, in one-letter code: Eukaryotic translation initiation factor 6 (245 aa).

Belongs to the eIF-6 family. As to quaternary structure, monomer. Associates with the 60S ribosomal subunit.

It is found in the cytoplasm. Its subcellular location is the nucleus. It localises to the nucleolus. Its function is as follows. Binds to the 60S ribosomal subunit and prevents its association with the 40S ribosomal subunit to form the 80S initiation complex in the cytoplasm. May also be involved in ribosome biogenesis. This is Eukaryotic translation initiation factor 6 from Tetrahymena thermophila (strain SB210).